Reading from the N-terminus, the 362-residue chain is Carbamoyl phosphate synthase pyrimidine-specific small chain (362 aa).

Residues 1–168 form a CPSase region; sequence MKRQLILEDG…TRDPYHVPGP (168 aa). 3 residues coordinate L-glutamine: serine 45, glycine 219, and glycine 221. The 188-residue stretch at 171–358 folds into the Glutamine amidotransferase type-1 domain; the sequence is RVVLVDYGMK…IKLMESNKHR (188 aa). Cysteine 246 functions as the Nucleophile in the catalytic mechanism. Residues leucine 247, glutamine 250, asparagine 288, glycine 290, and tyrosine 291 each contribute to the L-glutamine site. Active-site residues include histidine 331 and glutamate 333.

It belongs to the CarA family. In terms of assembly, composed of two chains; the small (or glutamine) chain promotes the hydrolysis of glutamine to ammonia, which is used by the large (or ammonia) chain to synthesize carbamoyl phosphate. Tetramer of heterodimers (alpha,beta)4.

The catalysed reaction is hydrogencarbonate + L-glutamine + 2 ATP + H2O = carbamoyl phosphate + L-glutamate + 2 ADP + phosphate + 2 H(+). The enzyme catalyses L-glutamine + H2O = L-glutamate + NH4(+). It functions in the pathway pyrimidine metabolism; UMP biosynthesis via de novo pathway; (S)-dihydroorotate from bicarbonate: step 1/3. Small subunit of the glutamine-dependent carbamoyl phosphate synthetase (CPSase). CPSase catalyzes the formation of carbamoyl phosphate from the ammonia moiety of glutamine, carbonate, and phosphate donated by ATP, constituting the first step of the biosynthetic pathway leading to pyrimidine nucleotides. The small subunit (glutamine amidotransferase) binds and cleaves glutamine to supply the large subunit with the substrate ammonia. The chain is Carbamoyl phosphate synthase pyrimidine-specific small chain from Halalkalibacterium halodurans (strain ATCC BAA-125 / DSM 18197 / FERM 7344 / JCM 9153 / C-125) (Bacillus halodurans).